The following is a 73-amino-acid chain: UPF0057 membrane protein At4g30650 (73 aa).

A run of 2 helical transmembrane segments spans residues 4 to 24 (NMEVFCEILIAILLPPLGVCL) and 37 to 57 (LVLTILGYIPGIIYALYVIVF).

It belongs to the UPF0057 (PMP3) family.

The protein resides in the membrane. This is UPF0057 membrane protein At4g30650 from Arabidopsis thaliana (Mouse-ear cress).